Here is a 308-residue protein sequence, read N- to C-terminus: uncharacterized protein (308 aa).

Polar residues-rich tracts occupy residues 138-148 and 205-229; these read WSFTKHGSNTP and STSH…QPPS. Disordered stretches follow at residues 138 to 157 and 205 to 235; these read WSFT…PLCN and STSH…TDAS.

It localises to the cytoplasm. This is an uncharacterized protein from Schizosaccharomyces pombe (strain 972 / ATCC 24843) (Fission yeast).